The following is a 367-amino-acid chain: DNA-directed RNA polymerase II subunit GRINL1A (367 aa).

Positions 15 to 40 (DLERRSLAELREMLKRQERLLRNEKF) form a coiled coil. The tract at residues 29–68 (KRQERLLRNEKFICKLPDKGKKIFDSFAKLKAAIAECEEV) is important for transcription repressor activity. Composition is skewed to polar residues over residues 117–131 (SVDN…QNQG), 176–185 (RVSSQAEDTS), and 205–225 (GEQQ…SGTQ). Disordered regions lie at residues 117–185 (SVDN…EDTS), 203–225 (DQGE…SGTQ), and 254–281 (PFRQ…RRDK). Positions 226–297 (KKPHYMEVLE…TAARLLPLHH (72 aa)) are interaction with Pol II. Ser269 is modified (phosphoserine). An important for transcription repressor activity region spans residues 298–313 (MPTQLLSIEESLALQK). Positions 300–329 (TQLLSIEESLALQKQRKQKYEEMQAKLAAQ) form a coiled coil. The tract at residues 314–339 (QRKQKYEEMQAKLAAQKLAERLNIKM) is interaction with Pol II. A disordered region spans residues 335 to 367 (LNIKMRSYNPEGESSGRYREVRDEDDDWSSDEF). Residues 357–367 (DEDDDWSSDEF) show a composition bias toward acidic residues.

The protein belongs to the GRINL1 family. Component of the Pol II(G) complex, which contains the RNA polymerase II (Pol II) core complex subunits and POLR2M isoform 1. Pol II(G) appears to be an abundant form of Pol II. In terms of processing, dephosphorylated at Ser-269 by the PNUTS-PP1 complex, promoting RNA polymerase II transcription pause-release.

Its subcellular location is the nucleus. Appears to be a stable component of the Pol II(G) complex form of RNA polymerase II (Pol II). Pol II synthesizes mRNA precursors and many functional non-coding RNAs and is the central component of the basal RNA polymerase II transcription machinery. May play a role in the Mediator complex-dependent regulation of transcription activation. Acts as a negative regulator of transcriptional activation; this repression is relieved by the Mediator complex, which restores Pol II(G) activator-dependent transcription to a level equivalent to that of Pol II. This is DNA-directed RNA polymerase II subunit GRINL1A (POLR2M) from Pongo abelii (Sumatran orangutan).